The sequence spans 491 residues: Mitochondrial distribution and morphology protein 12 (491 aa).

Positions 1 to 491 constitute an SMP-LTD domain; sequence MSIDLNWEAA…VFPSYWTFLV (491 aa). Over residues 72–82 the composition is skewed to acidic residues; sequence ESDSSEDEDGE. 3 disordered regions span residues 72 to 123, 201 to 313, and 389 to 434; these read ESDS…NHHD, GWPD…MRER, and GDED…QPRR. Basic and acidic residues-rich tracts occupy residues 83-123 and 213-229; these read GHDA…NHHD and MTDH…HNKN. Polar residues predominate over residues 230–249; it reads ETGSPSRPSTAHTNPTQLSH. Residues 252–262 are compositionally biased toward low complexity; the sequence is SAASSSNNTSN. Positions 270-279 are enriched in polar residues; sequence DHTSSTTATT. Residues 400–421 are compositionally biased toward low complexity; sequence STANTTTAASGSSTDNNNNNNE.

It belongs to the MDM12 family. In terms of assembly, component of the ER-mitochondria encounter structure (ERMES) or MDM complex, composed of mmm1, mdm10, mdm12 and mdm34. A mmm1 homodimer associates with one molecule of mdm12 on each side in a pairwise head-to-tail manner, and the SMP-LTD domains of mmm1 and mdm12 generate a continuous hydrophobic tunnel for phospholipid trafficking.

Its subcellular location is the mitochondrion outer membrane. The protein resides in the endoplasmic reticulum membrane. Functionally, component of the ERMES/MDM complex, which serves as a molecular tether to connect the endoplasmic reticulum (ER) and mitochondria. Components of this complex are involved in the control of mitochondrial shape and protein biogenesis, and function in nonvesicular lipid trafficking between the ER and mitochondria. Mdm12 is required for the interaction of the ER-resident membrane protein mmm1 and the outer mitochondrial membrane-resident beta-barrel protein mdm10. The mdm12-mmm1 subcomplex functions in the major beta-barrel assembly pathway that is responsible for biogenesis of all mitochondrial outer membrane beta-barrel proteins, and acts in a late step after the SAM complex. The mdm10-mdm12-mmm1 subcomplex further acts in the TOM40-specific pathway after the action of the mdm12-mmm1 complex. Essential for establishing and maintaining the structure of mitochondria and maintenance of mtDNA nucleoids. The polypeptide is Mitochondrial distribution and morphology protein 12 (Talaromyces stipitatus (strain ATCC 10500 / CBS 375.48 / QM 6759 / NRRL 1006) (Penicillium stipitatum)).